The primary structure comprises 432 residues: Non-peptidase homolog YmxG (432 aa).

Residues 1–20 (MKKFLITLLLGVFMGLQASA) form the signal peptide.

It belongs to the peptidase M16 family.

It localises to the secreted. May contribute to the full activity of the protease PqqE. In Helicobacter pylori (strain ATCC 700392 / 26695) (Campylobacter pylori), this protein is Non-peptidase homolog YmxG.